The primary structure comprises 227 residues: Orotidine 5'-phosphate decarboxylase (227 aa).

Substrate contacts are provided by residues D8, K30, 59 to 68 (DLKLYDIPYT), T118, R178, Q187, G207, and R208. The Proton donor role is filled by K61.

Belongs to the OMP decarboxylase family. Type 1 subfamily. In terms of assembly, homodimer.

The catalysed reaction is orotidine 5'-phosphate + H(+) = UMP + CO2. It participates in pyrimidine metabolism; UMP biosynthesis via de novo pathway; UMP from orotate: step 2/2. In terms of biological role, catalyzes the decarboxylation of orotidine 5'-monophosphate (OMP) to uridine 5'-monophosphate (UMP). This is Orotidine 5'-phosphate decarboxylase from Helicobacter pylori (strain J99 / ATCC 700824) (Campylobacter pylori J99).